Consider the following 350-residue polypeptide: Lipoyl synthase (350 aa).

Residues Met-1–Val-39 form a disordered region. Residues Cys-73, Cys-78, Cys-84, Cys-99, Cys-103, Cys-106, and Ser-314 each coordinate [4Fe-4S] cluster. The Radical SAM core domain maps to Trp-85–Met-303.

It belongs to the radical SAM superfamily. Lipoyl synthase family. [4Fe-4S] cluster is required as a cofactor.

Its subcellular location is the cytoplasm. The catalysed reaction is [[Fe-S] cluster scaffold protein carrying a second [4Fe-4S](2+) cluster] + N(6)-octanoyl-L-lysyl-[protein] + 2 oxidized [2Fe-2S]-[ferredoxin] + 2 S-adenosyl-L-methionine + 4 H(+) = [[Fe-S] cluster scaffold protein] + N(6)-[(R)-dihydrolipoyl]-L-lysyl-[protein] + 4 Fe(3+) + 2 hydrogen sulfide + 2 5'-deoxyadenosine + 2 L-methionine + 2 reduced [2Fe-2S]-[ferredoxin]. Its pathway is protein modification; protein lipoylation via endogenous pathway; protein N(6)-(lipoyl)lysine from octanoyl-[acyl-carrier-protein]: step 2/2. Functionally, catalyzes the radical-mediated insertion of two sulfur atoms into the C-6 and C-8 positions of the octanoyl moiety bound to the lipoyl domains of lipoate-dependent enzymes, thereby converting the octanoylated domains into lipoylated derivatives. In Ectopseudomonas mendocina (strain ymp) (Pseudomonas mendocina), this protein is Lipoyl synthase.